Reading from the N-terminus, the 122-residue chain is Glycine cleavage system H protein (122 aa).

One can recognise a Lipoyl-binding domain in the interval 19–101 (TATIGITKHA…EGNSWLYKIK (83 aa)). At Lys-60 the chain carries N6-lipoyllysine.

This sequence belongs to the GcvH family. In terms of assembly, the glycine cleavage system is composed of four proteins: P, T, L and H. (R)-lipoate serves as cofactor.

Functionally, the glycine cleavage system catalyzes the degradation of glycine. The H protein shuttles the methylamine group of glycine from the P protein to the T protein. This Dinoroseobacter shibae (strain DSM 16493 / NCIMB 14021 / DFL 12) protein is Glycine cleavage system H protein.